A 354-amino-acid chain; its full sequence is Guanine nucleotide-binding protein alpha-3 subunit (354 aa).

Residue Gly2 is the site of N-myristoyl glycine attachment. Cys4 carries the S-palmitoyl cysteine lipid modification. The 322-residue stretch at 33–354 folds into the G-alpha domain; the sequence is KECKILLLGS…TNALKDSGIL (322 aa). The segment at 36–49 is G1 motif; that stretch reads KILLLGSGESGKST. GTP is bound by residues 41–48, 177–183, 202–206, 271–274, and Ala326; these read GSGESGKS, LRARSKT, DVGGQ, and NKID. Mg(2+) contacts are provided by Ser48 and Thr183. The segment at 175-183 is G2 motif; that stretch reads DVLRARSKT. A G3 motif region spans residues 198–207; it reads IHLFDVGGQR. Residues 267 to 274 form a G4 motif region; the sequence is ILFLNKID. Residues 324–329 form a G5 motif region; that stretch reads TQATDT.

Belongs to the G-alpha family. As to quaternary structure, g proteins are composed of 3 units; alpha, beta and gamma. The alpha chain contains the guanine nucleotide binding site.

Functionally, guanine nucleotide-binding proteins (G proteins) are involved as modulators or transducers in various transmembrane signaling systems. GPA3 plays an active role in transmission of the pheromone signal. This chain is Guanine nucleotide-binding protein alpha-3 subunit (GPA3), found in Mycosarcoma maydis (Corn smut fungus).